A 687-amino-acid chain; its full sequence is DNA ligase (687 aa).

Residues Asp33–Asp37, Ser83–Leu84, and Glu113 contribute to the NAD(+) site. Lys115 serves as the catalytic N6-AMP-lysine intermediate. NAD(+) is bound by residues Arg136, Glu176, Lys292, and Lys316. Cys410, Cys413, Cys429, and Cys435 together coordinate Zn(2+). In terms of domain architecture, BRCT spans Ser599 to Thr687.

It belongs to the NAD-dependent DNA ligase family. LigA subfamily. Requires Mg(2+) as cofactor. The cofactor is Mn(2+).

The enzyme catalyses NAD(+) + (deoxyribonucleotide)n-3'-hydroxyl + 5'-phospho-(deoxyribonucleotide)m = (deoxyribonucleotide)n+m + AMP + beta-nicotinamide D-nucleotide.. In terms of biological role, DNA ligase that catalyzes the formation of phosphodiester linkages between 5'-phosphoryl and 3'-hydroxyl groups in double-stranded DNA using NAD as a coenzyme and as the energy source for the reaction. It is essential for DNA replication and repair of damaged DNA. This is DNA ligase from Mycobacterium marinum (strain ATCC BAA-535 / M).